Reading from the N-terminus, the 837-residue chain is Anaphase-promoting complex subunit 2 (837 aa).

A phosphoserine mark is found at Ser233, Ser329, Ser485, Ser549, and Ser712. The interval 478-508 (CLETGQDSEDDSGEPEDWVPDPVDADPVKSS) is disordered. The span at 483-496 (QDSEDDSGEPEDWV) shows a compositional bias: acidic residues. At Tyr825 the chain carries Phosphotyrosine.

This sequence belongs to the cullin family. In terms of assembly, the mammalian APC/C is composed at least of 14 distinct subunits ANAPC1, ANAPC2, CDC27/APC3, ANAPC4, ANAPC5, CDC16/APC6, ANAPC7, CDC23/APC8, ANAPC10, ANAPC11, CDC26/APC12, ANAPC13, ANAPC15 and ANAPC16 that assemble into a complex of at least 19 chains with a combined molecular mass of around 1.2 MDa; APC/C interacts with FZR1 and FBXO5. In the context of the APC/C complex, directly interacts with UBE2C and UBE2S. Interacts (via cullin domain) with ANAPC11 and with UBCH10. Interacts with NEUROD2. Interacts with FBXO43; the interaction is direct.

It functions in the pathway protein modification; protein ubiquitination. In terms of biological role, together with the RING-H2 protein ANAPC11, constitutes the catalytic component of the anaphase promoting complex/cyclosome (APC/C), a cell cycle-regulated E3 ubiquitin ligase that controls progression through mitosis and the G1 phase of the cell cycle. The APC/C complex acts by mediating ubiquitination and subsequent degradation of target proteins: it mainly mediates the formation of 'Lys-11'-linked polyubiquitin chains and, to a lower extent, the formation of 'Lys-48'- and 'Lys-63'-linked polyubiquitin chains. The APC/C complex catalyzes assembly of branched 'Lys-11'-/'Lys-48'-linked branched ubiquitin chains on target proteins. The CDC20-APC/C complex positively regulates the formation of synaptic vesicle clustering at active zone to the presynaptic membrane in postmitotic neurons. CDC20-APC/C-induced degradation of NEUROD2 drives presynaptic differentiation. The sequence is that of Anaphase-promoting complex subunit 2 (Anapc2) from Mus musculus (Mouse).